A 644-amino-acid chain; its full sequence is MATGIASGSGQLHLRKPVYWRSSYGKAHCHSNAILNGMQNQIPWSYWVSKFLRVHRSNYSQCQVKTNWKSHTGTINSCQRDGSTRYFDFAVIGSGIAGLRYALEVAKHGTVAVITKAEPHESNTNYAQGGVSAVFCPMDSVESHMQDTIVAGAYLCDEETVRVVCTEGPERIRELIAMGASFDHGEDGNLHLAREGGHSHRRIVHAADMTGREIERALLEAVFKHPNIHVFQHHFAIDFLTTQDGSDIICHGVDAINTETQEVIRFISKVTLLASGGAGHIYPSTTNPPVATGDGMAMAHRAQAVISNMEFVQFHPTALADEGLPNRPSARENAFLITEAVRGDGGILYNLDMERFMPMYDKRAELAPRDVVARSIDDQLKKRGEKYVLLDISHKPREKVLSHFPNIAAECLRHGLDITQQPIPVVPAAHYMCGGVRAGLEGETNVQGLYVAGEVACTGLHGANRLASNSLLEALVFARRAVQPSIDHVNVSRIDHCASSWWPRPVAPVVIGDTVLNKVIRRTREVRKELQSIMWEYVGIVRSTSRLTAAEKRINELELEWETYLFQHGWEPTMVGLEACEMRNLFCCANLVVSSALSRHESRGLHYTIDFPHVVESKRLPTIIFPSQRNSSWSSRQLHRQQIC.

FAD-binding positions include Ser94 to Ala97, Lys116, Asn123 to Gly130, and Asp294. Arg369 serves as the catalytic Proton donor/acceptor. FAD is bound by residues Glu454 and Ser470 to Leu471.

This sequence belongs to the FAD-dependent oxidoreductase 2 family. NadB subfamily. It depends on FAD as a cofactor.

It is found in the plastid. Its subcellular location is the chloroplast. The enzyme catalyses L-aspartate + O2 = iminosuccinate + H2O2. Its pathway is alkaloid biosynthesis; nicotine biosynthesis. It functions in the pathway cofactor biosynthesis; NAD(+) biosynthesis; iminoaspartate from L-aspartate (oxidase route): step 1/1. In terms of biological role, involved in the biosynthesis of pyridine alkaloid natural products, leading mainly to the production of anabasine, anatabine, nicotine and nornicotine, effective deterrents against herbivores with antiparasitic and pesticide properties (neurotoxins); nornicotine serves as the precursor in the synthesis of the carcinogen compound N'-nitrosonornicotine (NNN). Catalyzes the oxidation of L-aspartate to iminoaspartate. This is L-aspartate oxidase 2-a, chloroplastic from Nicotiana tabacum (Common tobacco).